The chain runs to 185 residues: Elongation factor P (185 aa).

The protein belongs to the elongation factor P family.

The protein resides in the cytoplasm. Its pathway is protein biosynthesis; polypeptide chain elongation. Functionally, involved in peptide bond synthesis. Stimulates efficient translation and peptide-bond synthesis on native or reconstituted 70S ribosomes in vitro. Probably functions indirectly by altering the affinity of the ribosome for aminoacyl-tRNA, thus increasing their reactivity as acceptors for peptidyl transferase. The chain is Elongation factor P from Oleidesulfovibrio alaskensis (strain ATCC BAA-1058 / DSM 17464 / G20) (Desulfovibrio alaskensis).